We begin with the raw amino-acid sequence, 272 residues long: MDKYAVIGNPVEHSLSPVIFQAFEKQTNHSFDYLKIKAPVNGFAAAVKKFHDEGGKGANITLPFKEEAYQLADKRSQEANEAHVASALQFREDGTIYAVNYDGLGLVQDLTRNHNITLTQKSILIVGAGGATRGILGPLLNAAPEKIVIVNRTPSKAHALAKIFHLRGEIQGGGFDELEPMRYDVIIHATSLGHQGKFPPLPDGLIGSQSCCYDLSYGKIASPFLQWAKDQGAKYNFDGLGMLVEHNAAVFYLWFGIYPDTNPVIEMLQAHL.

Residues serine 14–serine 16 and threonine 61 contribute to the shikimate site. Lysine 65 acts as the Proton acceptor in catalysis. A shikimate-binding site is contributed by aspartate 102. NADP(+) is bound by residues glycine 127 to alanine 131, asparagine 151 to lysine 156, and leucine 215. Shikimate is bound at residue tyrosine 217. An NADP(+)-binding site is contributed by glycine 239.

The protein belongs to the shikimate dehydrogenase family. Homodimer.

The catalysed reaction is shikimate + NADP(+) = 3-dehydroshikimate + NADPH + H(+). Its pathway is metabolic intermediate biosynthesis; chorismate biosynthesis; chorismate from D-erythrose 4-phosphate and phosphoenolpyruvate: step 4/7. Involved in the biosynthesis of the chorismate, which leads to the biosynthesis of aromatic amino acids. Catalyzes the reversible NADPH linked reduction of 3-dehydroshikimate (DHSA) to yield shikimate (SA). The polypeptide is Shikimate dehydrogenase (NADP(+)) (Coxiella burnetii (strain CbuG_Q212) (Coxiella burnetii (strain Q212))).